A 700-amino-acid chain; its full sequence is Polyphosphate kinase (700 aa).

Asn45 lines the ATP pocket. Arg373 and Arg403 together coordinate Mg(2+). Residues 428 to 462 (PGMKIHAKLLLITRREEQGFVRYAHIGTGNFHERT) enclose the PLD phosphodiesterase 1 domain. The active-site Phosphohistidine intermediate is His433. Tyr466, Arg562, and His590 together coordinate ATP. Residues 585-615 (DRFLEHPRVLVVHNDGDPQVFISSADWMERN) enclose the PLD phosphodiesterase 2 domain.

This sequence belongs to the polyphosphate kinase 1 (PPK1) family. Mg(2+) serves as cofactor. In terms of processing, an intermediate of this reaction is the autophosphorylated ppk in which a phosphate is covalently linked to a histidine residue through a N-P bond.

It carries out the reaction [phosphate](n) + ATP = [phosphate](n+1) + ADP. In terms of biological role, catalyzes the reversible transfer of the terminal phosphate of ATP to form a long-chain polyphosphate (polyP). The protein is Polyphosphate kinase of Vibrio vulnificus (strain YJ016).